An 80-amino-acid polypeptide reads, in one-letter code: Spermatid-specific protein S2 (80 aa).

Residues 1 to 36 show a composition bias toward basic residues; the sequence is VKSRYHQRQYRARKRYAKARRTKKPKRRPKPPRKLR. A disordered region spans residues 1-44; it reads VKSRYHQRQYRARKRYAKARRTKKPKRRPKPPRKLRYAPSKKQP.

The protein resides in the nucleus. It localises to the chromosome. Its function is as follows. Involved in nuclear basic protein transition: histones are replaced by spermatid specific proteins which are themselves replaced by protamines in late spermatids. The sequence is that of Spermatid-specific protein S2 from Scyliorhinus canicula (Small-spotted catshark).